The sequence spans 70 residues: ATP synthase subunit c (70 aa).

2 helical membrane-spanning segments follow: residues 4-24 (IAAG…DGIV) and 47-67 (FIGV…ALMV).

The protein belongs to the ATPase C chain family. As to quaternary structure, F-type ATPases have 2 components, F(1) - the catalytic core - and F(0) - the membrane proton channel. F(1) has five subunits: alpha(3), beta(3), gamma(1), delta(1), epsilon(1). F(0) has three main subunits: a(1), b(2) and c(10-14). The alpha and beta chains form an alternating ring which encloses part of the gamma chain. F(1) is attached to F(0) by a central stalk formed by the gamma and epsilon chains, while a peripheral stalk is formed by the delta and b chains.

It is found in the cell membrane. Its function is as follows. F(1)F(0) ATP synthase produces ATP from ADP in the presence of a proton or sodium gradient. F-type ATPases consist of two structural domains, F(1) containing the extramembraneous catalytic core and F(0) containing the membrane proton channel, linked together by a central stalk and a peripheral stalk. During catalysis, ATP synthesis in the catalytic domain of F(1) is coupled via a rotary mechanism of the central stalk subunits to proton translocation. In terms of biological role, key component of the F(0) channel; it plays a direct role in translocation across the membrane. A homomeric c-ring of between 10-14 subunits forms the central stalk rotor element with the F(1) delta and epsilon subunits. In Levilactobacillus brevis (strain ATCC 367 / BCRC 12310 / CIP 105137 / JCM 1170 / LMG 11437 / NCIMB 947 / NCTC 947) (Lactobacillus brevis), this protein is ATP synthase subunit c.